The chain runs to 288 residues: UPF0761 membrane protein HS_0693 (288 aa).

The next 6 helical transmembrane spans lie at 36–56 (TLAL…FPVF), 92–112 (QMSA…IHSI), 127–147 (PAIF…IVIA), 176–196 (LLSL…YMVV), 200–220 (KVSI…FTLG), and 240–260 (AMAT…AVLL).

The protein belongs to the UPF0761 family.

It localises to the cell inner membrane. The sequence is that of UPF0761 membrane protein HS_0693 from Histophilus somni (strain 129Pt) (Haemophilus somnus).